We begin with the raw amino-acid sequence, 498 residues long: Polyphosphate:AMP phosphotransferase (498 aa).

PPK2 stretches follow at residues Ile11–Ala234 and Leu269–Ala491.

This sequence belongs to the polyphosphate kinase 2 (PPK2) family. Class II subfamily.

It catalyses the reaction [phosphate](n) + ADP = [phosphate](n+1) + AMP. Functionally, uses inorganic polyphosphate (polyP) as a donor to convert AMP to ADP. Can also convert GMP to GDP, with lower efficiency. This Pseudomonas syringae pv. tomato (strain ATCC BAA-871 / DC3000) protein is Polyphosphate:AMP phosphotransferase.